The primary structure comprises 231 residues: Non-fluorescent flavoprotein (231 aa).

It belongs to the bacterial luciferase oxidoreductase family. In terms of assembly, homodimer. FMN is required as a cofactor.

The protein is Non-fluorescent flavoprotein (luxF) of Photobacterium phosphoreum.